The primary structure comprises 144 residues: Large ribosomal subunit protein uL24 (144 aa).

A disordered region spans residues 1–22 (MKFNKMVSSDRGKNRKRHFNAP). The span at 13–22 (KNRKRHFNAP) shows a compositional bias: basic residues.

It belongs to the universal ribosomal protein uL24 family.

This Littorina littorea (Common periwinkle) protein is Large ribosomal subunit protein uL24 (RPL26).